A 451-amino-acid chain; its full sequence is Heme sensor protein HssS (451 aa).

The next 2 membrane-spanning stretches (helical) occupy residues 9–29 and 164–184; these read IAIYAITVILFSALMSFLFTN and IFLAVLITLLLIISISLVIAS. An HAMP domain is found at 186–238; that stretch reads YSIIKPVTALKNATTRIMKGDFSTPIKQTRHDEIGTLQSRFNTMRQNLGQVDQ. In terms of domain architecture, Histidine kinase spans 246–451; the sequence is NVSHEVKTPL…KTQFIVKLFI (206 aa). His-249 carries the phosphohistidine; by autocatalysis modification.

In terms of processing, autophosphorylated.

The protein localises to the cell membrane. The catalysed reaction is ATP + protein L-histidine = ADP + protein N-phospho-L-histidine.. Member of the two-component regulatory system HssS/HssR involved in intracellular heme homeostasis and tempering of staphylococcal virulence. HssS functions as a heme sensor histidine kinase which is autophosphorylated at a histidine residue and transfers its phosphate group to an aspartate residue of HssR. HssR/HssS activates the expression of HrtAB, an efflux pump, in response to extracellular heme, hemin, hemoglobin or blood. The polypeptide is Heme sensor protein HssS (hssS) (Staphylococcus epidermidis (strain ATCC 35984 / DSM 28319 / BCRC 17069 / CCUG 31568 / BM 3577 / RP62A)).